Here is a 474-residue protein sequence, read N- to C-terminus: MAYIQLEPLNEGFLSRISDVLLCGWTCQHCCQRCYESSCCQSSEDEVEILGPFPAQTPPWLMASRSNDKDGDSVHTASDVPLTPRTNSPDGRRSSSDTSKSTYSLTRRISSLDSRRPSSPLIDIKPIEFGVLSAKKEPIQPSVLRRTYTPDDYFRKFEPRLYSLDSNLDDVDSLTDEEIMSKYQLGMLHFSTQYDLLHNHLTVRVIEARDLPPPISHDGSRQDMAHSNPYVKICLLPDQKNSKQTGVKRKTQKPVFEERYTFEIPFLEAQRRTLLLTVVDFDKFSRHCVIGKVAVPLCEVDLVKGGHWWKALIPSSQNEVELGELLLSLNYLPSAGRLNVDIIRAKQLLQTDVSQGSDPFVKIQLVHGLKLVKTKKTSFLRGTIDPFYNESFSFKVPQEELENASLVFTVFGHNMKSSNDFIGRIVIGQYSSGPSESNHWRRMLNTHRTAVEQWHSLRSRAECDRVSPASLEVT.

Residues 60-117 are disordered; the sequence is WLMASRSNDKDGDSVHTASDVPLTPRTNSPDGRRSSSDTSKSTYSLTRRISSLDSRRP. The span at 96–117 shows a compositional bias: low complexity; the sequence is SDTSKSTYSLTRRISSLDSRRP. Residues S118 and S119 each carry the phosphoserine modification. 2 consecutive C2 domains span residues 184-310 and 321-455; these read QLGM…HWWK and ELGE…EQWH.

It belongs to the synaptotagmin family. As to expression, expressed in brain and kidney.

Its subcellular location is the membrane. Its function is as follows. Plays a role in dendrite formation by melanocytes. This is Synaptotagmin-17 (Syt17) from Rattus norvegicus (Rat).